The primary structure comprises 428 residues: Phosphoglucosamine mutase (428 aa).

Ser96 (phosphoserine intermediate) is an active-site residue. Positions 96, 229, 231, and 233 each coordinate Mg(2+). Ser96 bears the Phosphoserine mark.

The protein belongs to the phosphohexose mutase family. Requires Mg(2+) as cofactor. Post-translationally, activated by phosphorylation.

It catalyses the reaction alpha-D-glucosamine 1-phosphate = D-glucosamine 6-phosphate. Catalyzes the conversion of glucosamine-6-phosphate to glucosamine-1-phosphate. The protein is Phosphoglucosamine mutase of Thermotoga neapolitana (strain ATCC 49049 / DSM 4359 / NBRC 107923 / NS-E).